The sequence spans 305 residues: Ribosomal RNA small subunit methyltransferase H (305 aa).

Residues 47–49 (GGH), Asp66, Phe93, Asp108, and Gln115 contribute to the S-adenosyl-L-methionine site. The disordered stretch occupies residues 280–305 (ASAEEQERNPRSRSAKLRIARKRSES). Positions 290–305 (RSRSAKLRIARKRSES) are enriched in basic residues.

Belongs to the methyltransferase superfamily. RsmH family.

Its subcellular location is the cytoplasm. It carries out the reaction cytidine(1402) in 16S rRNA + S-adenosyl-L-methionine = N(4)-methylcytidine(1402) in 16S rRNA + S-adenosyl-L-homocysteine + H(+). In terms of biological role, specifically methylates the N4 position of cytidine in position 1402 (C1402) of 16S rRNA. The polypeptide is Ribosomal RNA small subunit methyltransferase H (Synechococcus sp. (strain WH7803)).